The sequence spans 80 residues: Crustacean hyperglycemic hormones (80 aa).

Disulfide bonds link cysteine 13/cysteine 49, cysteine 29/cysteine 45, and cysteine 32/cysteine 58. Valine amide is present on valine 78.

This sequence belongs to the arthropod CHH/MIH/GIH/VIH hormone family. In terms of tissue distribution, produced by the medulla terminalis X-organ in the eyestalks and transported to the sinus gland where they are stored and released.

The protein resides in the secreted. In terms of biological role, hormone found in the sinus gland of isopods and decapods which controls the blood sugar level. Has a secretagogue action over the amylase released from the midgut gland. May act as a stress hormone and may be involved in the control of molting and reproduction. The protein is Crustacean hyperglycemic hormones of Penaeus vannamei (Whiteleg shrimp).